A 144-amino-acid chain; its full sequence is 3-dehydroquinate dehydratase (144 aa).

Residue Tyr-24 is the Proton acceptor of the active site. The substrate site is built by Asn-76, His-82, and Asp-89. His-102 functions as the Proton donor in the catalytic mechanism. Substrate is bound by residues Leu-103–Ser-104 and Arg-113.

The protein belongs to the type-II 3-dehydroquinase family. As to quaternary structure, homododecamer.

It carries out the reaction 3-dehydroquinate = 3-dehydroshikimate + H2O. The protein operates within metabolic intermediate biosynthesis; chorismate biosynthesis; chorismate from D-erythrose 4-phosphate and phosphoenolpyruvate: step 3/7. Catalyzes a trans-dehydration via an enolate intermediate. This chain is 3-dehydroquinate dehydratase, found in Nitrosomonas europaea (strain ATCC 19718 / CIP 103999 / KCTC 2705 / NBRC 14298).